A 281-amino-acid chain; its full sequence is Probable endonuclease 4 (281 aa).

Zn(2+)-binding residues include H69, H109, E145, D179, H182, H216, D229, H231, and E261.

This sequence belongs to the AP endonuclease 2 family. Zn(2+) serves as cofactor.

The catalysed reaction is Endonucleolytic cleavage to 5'-phosphooligonucleotide end-products.. In terms of biological role, endonuclease IV plays a role in DNA repair. It cleaves phosphodiester bonds at apurinic or apyrimidinic (AP) sites, generating a 3'-hydroxyl group and a 5'-terminal sugar phosphate. The sequence is that of Probable endonuclease 4 from Yersinia enterocolitica serotype O:8 / biotype 1B (strain NCTC 13174 / 8081).